Reading from the N-terminus, the 596-residue chain is Proteasome-associated ATPase (596 aa).

A coiled-coil region spans residues 12–94; the sequence is SRWERETQDL…KEEIDRLAQP (83 aa). ATP is bound at residue 280-285; sequence GCGKTL. Residues 595–596 are docks into pockets in the proteasome alpha-ring; sequence YL.

It belongs to the AAA ATPase family. In terms of assembly, homohexamer. Assembles into a hexameric ring structure that caps the 20S proteasome core. Strongly interacts with the prokaryotic ubiquitin-like protein Pup through a hydrophobic interface; the interacting region of ARC lies in its N-terminal coiled-coil domain. There is one Pup binding site per ARC hexamer ring. Upon ATP-binding, the C-terminus of ARC interacts with the alpha-rings of the proteasome core, possibly by binding to the intersubunit pockets.

It participates in protein degradation; proteasomal Pup-dependent pathway. Its function is as follows. ATPase which is responsible for recognizing, binding, unfolding and translocation of pupylated proteins into the bacterial 20S proteasome core particle. May be essential for opening the gate of the 20S proteasome via an interaction with its C-terminus, thereby allowing substrate entry and access to the site of proteolysis. Thus, the C-termini of the proteasomal ATPase may function like a 'key in a lock' to induce gate opening and therefore regulate proteolysis. The protein is Proteasome-associated ATPase of Stackebrandtia nassauensis (strain DSM 44728 / CIP 108903 / NRRL B-16338 / NBRC 102104 / LLR-40K-21).